A 344-amino-acid chain; its full sequence is Arginine N-succinyltransferase (344 aa).

Residue leucine 125 coordinates succinyl-CoA. The active-site Proton donor is histidine 229.

This sequence belongs to the arginine N-succinyltransferase family.

It carries out the reaction succinyl-CoA + L-arginine = N(2)-succinyl-L-arginine + CoA + H(+). It participates in amino-acid degradation; L-arginine degradation via AST pathway; L-glutamate and succinate from L-arginine: step 1/5. Functionally, catalyzes the transfer of succinyl-CoA to arginine to produce N(2)-succinylarginine. This is Arginine N-succinyltransferase from Citrobacter koseri (strain ATCC BAA-895 / CDC 4225-83 / SGSC4696).